The following is a 353-amino-acid chain: Photosystem II protein D1 (353 aa).

N-acetylthreonine is present on T2. T2 bears the Phosphothreonine mark. A run of 3 helical transmembrane segments spans residues Y29–S46, H118–L133, and W142–A156. H118 contributes to the chlorophyll a binding site. Y126 provides a ligand contact to pheophytin a. Residues D170 and E189 each coordinate [CaMn4O5] cluster. The chain crosses the membrane as a helical span at residues F197–L218. Position 198 (H198) interacts with chlorophyll a. Residues H215 and S264–F265 contribute to the a quinone site. H215 is a binding site for Fe cation. H272 lines the Fe cation pocket. A helical membrane pass occupies residues F274–L288. Positions 332, 333, 342, and 344 each coordinate [CaMn4O5] cluster. A propeptide spanning residues A345 to G353 is cleaved from the precursor.

Belongs to the reaction center PufL/M/PsbA/D family. PSII is composed of 1 copy each of membrane proteins PsbA, PsbB, PsbC, PsbD, PsbE, PsbF, PsbH, PsbI, PsbJ, PsbK, PsbL, PsbM, PsbT, PsbX, PsbY, PsbZ, Psb30/Ycf12, at least 3 peripheral proteins of the oxygen-evolving complex and a large number of cofactors. It forms dimeric complexes. The cofactor is The D1/D2 heterodimer binds P680, chlorophylls that are the primary electron donor of PSII, and subsequent electron acceptors. It shares a non-heme iron and each subunit binds pheophytin, quinone, additional chlorophylls, carotenoids and lipids. D1 provides most of the ligands for the Mn4-Ca-O5 cluster of the oxygen-evolving complex (OEC). There is also a Cl(-1) ion associated with D1 and D2, which is required for oxygen evolution. The PSII complex binds additional chlorophylls, carotenoids and specific lipids.. Post-translationally, tyr-161 forms a radical intermediate that is referred to as redox-active TyrZ, YZ or Y-Z. C-terminally processed by CTPA; processing is essential to allow assembly of the oxygen-evolving complex and thus photosynthetic growth.

The protein localises to the plastid. The protein resides in the chloroplast thylakoid membrane. It catalyses the reaction 2 a plastoquinone + 4 hnu + 2 H2O = 2 a plastoquinol + O2. Its function is as follows. Photosystem II (PSII) is a light-driven water:plastoquinone oxidoreductase that uses light energy to abstract electrons from H(2)O, generating O(2) and a proton gradient subsequently used for ATP formation. It consists of a core antenna complex that captures photons, and an electron transfer chain that converts photonic excitation into a charge separation. The D1/D2 (PsbA/PsbD) reaction center heterodimer binds P680, the primary electron donor of PSII as well as several subsequent electron acceptors. This is Photosystem II protein D1 from Vitis vinifera (Grape).